The chain runs to 173 residues: PRKR-interacting protein 1 homolog (173 aa).

Disordered stretches follow at residues 1-27 (MAAE…KNAT) and 115-173 (NKKL…LEDQ). The required for RNA-binding stretch occupies residues 50–142 (RPKEWSPRSA…LKEKKKMAKM (93 aa)). Residues 99–161 (SEKHNLDDDF…IEKHVELDNS (63 aa)) adopt a coiled-coil conformation. Over residues 124–142 (AKRRLKRQKLKEKKKMAKM) the composition is skewed to basic residues. The required for nuclear localization stretch occupies residues 125-137 (KRRLKRQKLKEKK). The span at 143–173 (AKKEEKKEEIEKHVELDNSPESSDKSDLEDQ) shows a compositional bias: basic and acidic residues.

Belongs to the PRKRIP1 family. In terms of assembly, component of the pre-catalytic and post-catalytic spliceosome complexes.

The protein resides in the nucleus. It is found in the nucleolus. Required for pre-mRNA splicing as component of the spliceosome. Binds double-stranded RNA. The polypeptide is PRKR-interacting protein 1 homolog (prkrip1) (Xenopus tropicalis (Western clawed frog)).